Consider the following 176-residue polypeptide: Small ribosomal subunit protein uS5 (176 aa).

The region spanning 11–74 is the S5 DRBM domain; it reads LSEVLVDVNR…QAAKKRMMKV (64 aa).

Belongs to the universal ribosomal protein uS5 family. As to quaternary structure, part of the 30S ribosomal subunit. Contacts proteins S4 and S8.

In terms of biological role, with S4 and S12 plays an important role in translational accuracy. Located at the back of the 30S subunit body where it stabilizes the conformation of the head with respect to the body. The sequence is that of Small ribosomal subunit protein uS5 from Rickettsia peacockii (strain Rustic).